The chain runs to 303 residues: UDP-3-O-acyl-N-acetylglucosamine deacetylase (303 aa).

Zn(2+) is bound by residues His77, His236, and Asp240. Residue His263 is the Proton donor of the active site.

It belongs to the LpxC family. It depends on Zn(2+) as a cofactor.

The catalysed reaction is a UDP-3-O-[(3R)-3-hydroxyacyl]-N-acetyl-alpha-D-glucosamine + H2O = a UDP-3-O-[(3R)-3-hydroxyacyl]-alpha-D-glucosamine + acetate. Its pathway is glycolipid biosynthesis; lipid IV(A) biosynthesis; lipid IV(A) from (3R)-3-hydroxytetradecanoyl-[acyl-carrier-protein] and UDP-N-acetyl-alpha-D-glucosamine: step 2/6. In terms of biological role, catalyzes the hydrolysis of UDP-3-O-myristoyl-N-acetylglucosamine to form UDP-3-O-myristoylglucosamine and acetate, the committed step in lipid A biosynthesis. This chain is UDP-3-O-acyl-N-acetylglucosamine deacetylase, found in Ruthia magnifica subsp. Calyptogena magnifica.